Consider the following 431-residue polypeptide: Enolase (431 aa).

A (2R)-2-phosphoglycerate-binding site is contributed by Q175. Residue E217 is the Proton donor of the active site. The Mg(2+) site is built by D254, E295, and D322. (2R)-2-phosphoglycerate contacts are provided by K347, R376, S377, and K398. The Proton acceptor role is filled by K347.

It belongs to the enolase family. Requires Mg(2+) as cofactor.

The protein resides in the cytoplasm. It localises to the secreted. The protein localises to the cell surface. The catalysed reaction is (2R)-2-phosphoglycerate = phosphoenolpyruvate + H2O. Its pathway is carbohydrate degradation; glycolysis; pyruvate from D-glyceraldehyde 3-phosphate: step 4/5. Functionally, catalyzes the reversible conversion of 2-phosphoglycerate (2-PG) into phosphoenolpyruvate (PEP). It is essential for the degradation of carbohydrates via glycolysis. The chain is Enolase from Anaplasma marginale (strain St. Maries).